Reading from the N-terminus, the 93-residue chain is Large ribosomal subunit protein bL27 (93 aa).

The propeptide occupies 1-10 (MRFLLGLQYF). Positions 14 to 36 (KGVGSTKNGRDSESKRLGAKKSD) are disordered. Residues 21-36 (NGRDSESKRLGAKKSD) show a composition bias toward basic and acidic residues.

This sequence belongs to the bacterial ribosomal protein bL27 family. In terms of processing, the N-terminus is cleaved by ribosomal processing cysteine protease Prp.

This Mycoplasma capricolum subsp. capricolum (strain California kid / ATCC 27343 / NCTC 10154) protein is Large ribosomal subunit protein bL27.